The sequence spans 375 residues: Chaperone protein DnaJ (375 aa).

The J domain occupies 5–70 (DFYETLGVAK…QKRAAYDRYG (66 aa)). A CR-type zinc finger spans residues 136–214 (GKTAQIRVPT…CHGQGRVTEE (79 aa)). Residues Cys149, Cys152, Cys166, Cys169, Cys188, Cys191, Cys202, and Cys205 each coordinate Zn(2+). CXXCXGXG motif repeat units follow at residues 149-156 (CDVCSGSG), 166-173 (CGTCQGSG), 188-195 (CPTCHGRG), and 202-209 (CPKCHGQG).

It belongs to the DnaJ family. Homodimer. Requires Zn(2+) as cofactor.

Its subcellular location is the cytoplasm. Its function is as follows. Participates actively in the response to hyperosmotic and heat shock by preventing the aggregation of stress-denatured proteins and by disaggregating proteins, also in an autonomous, DnaK-independent fashion. Unfolded proteins bind initially to DnaJ; upon interaction with the DnaJ-bound protein, DnaK hydrolyzes its bound ATP, resulting in the formation of a stable complex. GrpE releases ADP from DnaK; ATP binding to DnaK triggers the release of the substrate protein, thus completing the reaction cycle. Several rounds of ATP-dependent interactions between DnaJ, DnaK and GrpE are required for fully efficient folding. Also involved, together with DnaK and GrpE, in the DNA replication of plasmids through activation of initiation proteins. This chain is Chaperone protein DnaJ, found in Rhizobium etli (strain CIAT 652).